The chain runs to 221 residues: Thiopurine S-methyltransferase (221 aa).

S-adenosyl-L-methionine contacts are provided by Trp12, Leu47, Glu68, and Arg125.

The protein belongs to the class I-like SAM-binding methyltransferase superfamily. TPMT family.

Its subcellular location is the cytoplasm. The catalysed reaction is S-adenosyl-L-methionine + a thiopurine = S-adenosyl-L-homocysteine + a thiopurine S-methylether.. The polypeptide is Thiopurine S-methyltransferase (Legionella pneumophila (strain Paris)).